A 718-amino-acid chain; its full sequence is Neutral ceramidase B (718 aa).

A signal peptide spans 1–20 (MINSFKKLIILISLVIILLS). N-linked (GlcNAc...) asparagine glycosylation is found at Asn224 and Asn252. Ser298 acts as the Nucleophile in catalysis. Asn358, Asn378, Asn391, Asn421, Asn422, Asn577, Asn610, and Asn614 each carry an N-linked (GlcNAc...) asparagine glycan.

The protein belongs to the neutral ceramidase family.

It localises to the secreted. It carries out the reaction an N-acylsphing-4-enine + H2O = sphing-4-enine + a fatty acid. Its function is as follows. Hydrolyzes the sphingolipid ceramide into sphingosine and free fatty acid. The protein is Neutral ceramidase B (dcd2B) of Dictyostelium discoideum (Social amoeba).